Consider the following 900-residue polypeptide: Translation initiation factor IF-2 (900 aa).

3 stretches are compositionally biased toward basic and acidic residues: residues 119-158 (AAKAEAEAKAKADAEAKQKADAEAKAKAEKAAKAKSEKQE), 165-191 (ADEKAAKDEADKLQAAKDEVAKAKADA), and 198-229 (EEARRLAEENAKRWADEEKARKEAEKTGDHHV). The segment at 119–306 (AAKAEAEAKA…NARSVAPESM (188 aa)) is disordered. Over residues 257-272 (SANAGNNANSNSNAGS) the composition is skewed to low complexity. The region spanning 400–569 (PRAPVVTIMG…LLESEVLELK (170 aa)) is the tr-type G domain. A G1 region spans residues 409–416 (GHVDHGKT). 409-416 (GHVDHGKT) is a GTP binding site. The segment at 434-438 (GITQH) is G2. The segment at 455-458 (DTPG) is G3. Residues 455-459 (DTPGH) and 509-512 (NKID) each bind GTP. The segment at 509–512 (NKID) is G4. Residues 545–547 (SAK) are G5.

It belongs to the TRAFAC class translation factor GTPase superfamily. Classic translation factor GTPase family. IF-2 subfamily.

The protein localises to the cytoplasm. One of the essential components for the initiation of protein synthesis. Protects formylmethionyl-tRNA from spontaneous hydrolysis and promotes its binding to the 30S ribosomal subunits. Also involved in the hydrolysis of GTP during the formation of the 70S ribosomal complex. The protein is Translation initiation factor IF-2 of Shewanella piezotolerans (strain WP3 / JCM 13877).